The sequence spans 342 residues: MKSLVLLLLVAVTVSSVVSKPLPEDSEAEVHKEFETWKVKYGKSYPSTEEEAKRKEMWLATRKKVMEHNTRAGNGLESYTMAVNHLADLTTEEVPKGLLPMPRPEEEEVDKEFEMWKTHNGKTYNSTEEEAKRKEIWLATRARVMEHNKRAENGSESFTMGINYFSDMTFEEIPKARLMVVFPTRDGGEEAEVDKEFETWKVQHGKNYGSTEEEAKRKGIWLATRTRVMEHNKRAETGSESFTMGMNHLSDKTTAEVTGRRLQDGEEAEVHKEFETWKVKYGKTYPSTVEEAKRKEIWLATRKMVMEHNKRAENGLESFTMGVNHFADLTAEEVPRGLFPME.

The first 19 residues, 1-19 (MKSLVLLLLVAVTVSSVVS), serve as a signal peptide directing secretion. Asn-153 is a glycosylation site (N-linked (GlcNAc) asparagine). O-linked (GlcNAc) threonine glycosylation is present at Thr-184.

Post-translationally, N-glycosylated, with sialylated biantennary complex-type glycans. In terms of processing, O-glycosylated, with sialylated oligosaccharides. Expressed in the skin, liver. intestine, spleen, pancreas and kidney.

The protein resides in the cytoplasm. Its subcellular location is the vacuole. Its function is as follows. Inhibits papain and ficin (cysteine proteinases) but not trypsin (a serine proteinase). This is Cystein proteinase inhibitor protein salarin (salarin) from Salmo salar (Atlantic salmon).